The primary structure comprises 712 residues: MSLTEAEYHELEKQVNLDDIDFSDLEEQYEVDVGLDNYVVVDGAPIAPEAKVPVLIKVLKKLFNTVGKVVEGDEGIYMPLEDGKSKGYLFVQFETSEMAEAAIKQLHGKKLDQKHRLLVNRLSDIEKYGVEGNVAAEFVEPELPPFKSHGYLKSWLQDPQGRDQIALHHSETFGVFWNKKKSDPEPVFEPRKFFTSKYAKFSPKGTYLFSIHPQGVQSWGGADFSSIDKFMHNQVRLVDFSPNEKYMVTLSPLPITAPDSAAERAVFPFGPESYGHKLVIWDLTTGEPARTFALPPHLEGQKEMPWPLVKWSHDDKYCARQGPGALAVYETPSFQLLDKKLIKIDDIVDFEWAPAGVHLANNKSENGHHLLSYWTPESSNQTARVAVMQIPTRQILRTVNLFQVSDCKMHWQSEGKLLCVKVDRHTKSGKTIFTNLEFFKTTEKDIPVEKLELKEIVINFAWEPKSERFVIISRLDDGNLNSAIPKNIIDFYAPDVNGKGKSATSVYKSYKTITDKHSNTVFWSPKGRYVVVATISRSNGEIEFFDVSFDDSNKNAPANVKLLKNDKFSGMTNISWDPSGRFVATWSSSWLHTIENGYKLYEFTGNLLRDDSIDQFKEFIWRPRPASLLNSADRKKVRANLREYSAQFEESDAMEADAALRELIYARRRALEDWKAYRAKHASKAVKANEVQAEIIEEIKEEIIEEKEEIVE.

Residues Met-1–Met-98 form a sufficient for interaction with HCR1 and TIF32 region. The segment at Met-1–Phe-224 is sufficient for interaction with PIC8. The RRM domain occupies Asn-37 to Asp-124. 7 WD repeats span residues Arg-191–Lys-229, Phe-230–Ala-293, Gln-301–Lys-339, Ile-342–Arg-384, Glu-452–Ala-493, Ile-513–Asn-555, and Asp-566–Thr-604.

This sequence belongs to the eIF-3 subunit B family. In terms of assembly, component of the eukaryotic translation initiation factor 3 (eIF-3) complex.

The protein resides in the cytoplasm. Functionally, RNA-binding component of the eukaryotic translation initiation factor 3 (eIF-3) complex, which is involved in protein synthesis of a specialized repertoire of mRNAs and, together with other initiation factors, stimulates binding of mRNA and methionyl-tRNAi to the 40S ribosome. The eIF-3 complex specifically targets and initiates translation of a subset of mRNAs involved in cell proliferation. This Scheffersomyces stipitis (strain ATCC 58785 / CBS 6054 / NBRC 10063 / NRRL Y-11545) (Yeast) protein is Eukaryotic translation initiation factor 3 subunit B.